A 451-amino-acid chain; its full sequence is UDP-glycosyltransferase 76C4 (451 aa).

UDP-alpha-D-glucose contacts are provided by residues Ser273, 332-334 (APQ), 349-357 (HNGWNSTVE), and 371-374 (RWDQ).

The protein belongs to the UDP-glycosyltransferase family.

The chain is UDP-glycosyltransferase 76C4 (UGT76C4) from Arabidopsis thaliana (Mouse-ear cress).